The following is a 287-amino-acid chain: 4-hydroxybenzoate octaprenyltransferase (287 aa).

9 helical membrane passes run 7–27, 30–50, 94–114, 118–138, 142–162, 167–187, 209–229, 235–255, and 266–286; these read FISY…LLLW, LWAL…LIFV, VAVA…LNAF, LSVL…FFAM, VLGI…LDFI, WFLF…YAMV, VVVI…VAQL, YFLV…KLVS, and FRHN…GLGV.

It belongs to the UbiA prenyltransferase family. Mg(2+) is required as a cofactor.

Its subcellular location is the cell inner membrane. The enzyme catalyses all-trans-octaprenyl diphosphate + 4-hydroxybenzoate = 4-hydroxy-3-(all-trans-octaprenyl)benzoate + diphosphate. It functions in the pathway cofactor biosynthesis; ubiquinone biosynthesis. In terms of biological role, catalyzes the prenylation of para-hydroxybenzoate (PHB) with an all-trans polyprenyl group. Mediates the second step in the final reaction sequence of ubiquinone-8 (UQ-8) biosynthesis, which is the condensation of the polyisoprenoid side chain with PHB, generating the first membrane-bound Q intermediate 3-octaprenyl-4-hydroxybenzoate. This chain is 4-hydroxybenzoate octaprenyltransferase, found in Polynucleobacter necessarius subsp. necessarius (strain STIR1).